The sequence spans 367 residues: Inhibin alpha chain (367 aa).

The first 20 residues, M1 to G20, serve as a signal peptide directing secretion. The propeptide occupies C21–R63. A propeptide spans H64–R233 (inhibin alpha N-terminal region). N147 and N269 each carry an N-linked (GlcNAc...) asparagine glycan. 3 cysteine pairs are disulfide-bonded: C263–C329, C292–C364, and C296–C366.

This sequence belongs to the TGF-beta family. Dimeric, linked by one or more disulfide bonds. Activin B is a dimer of alpha and beta-B. Inhibin A is a dimer of alpha and beta-A. Inhibin B is a dimer of alpha and beta-B. Interacts with TGFBR3L; this interaction regulates female fertility. Proteolytic processing yields a number of bioactive forms, consisting either solely of the mature alpha chain, of the most N-terminal propeptide linked through a disulfide bond to the mature alpha chain, or of the entire proprotein.

It is found in the secreted. Its function is as follows. Inhibins and activins inhibit and activate, respectively, the secretion of follitropin by the pituitary gland. Inhibins/activins are involved in regulating a number of diverse functions such as hypothalamic and pituitary hormone secretion, gonadal hormone secretion, germ cell development and maturation, erythroid differentiation, insulin secretion, nerve cell survival, embryonic axial development or bone growth, depending on their subunit composition. Inhibins appear to oppose the functions of activins. Functionally, inhibin A is a dimer of alpha/INHA and beta-A/INHBA that functions as a feedback regulator in the hypothalamic-pituitary-gonadal (HPG) axis. Inhibits the secretion of FSH from the anterior pituitary gland by acting on pituitary gonadotrope cells. Antagonizes activin A by binding to the proteoglycan, betaglycan, and forming a stable complex with and, thereby, sequestering type II activin receptors while excluding type I receptor. Inhibin B is a dimer of alpha and beta-B that plays a crucial role in the regulation of the reproductive system by inhibiting the secretion of follicle-stimulating hormone (FSH) from the anterior pituitary gland. Thereby, maintains reproductive homeostasis in both males and females. Acts as a more potent suppressor of FSH release than inhibin A. Functions as competitive receptor antagonist binding activin type II receptors with high affinity in the presence of the TGF-beta type III coreceptor/TGFBR3L. This chain is Inhibin alpha chain (INHA), found in Equus caballus (Horse).